Consider the following 230-residue polypeptide: Cytidylate kinase (230 aa).

Gly-10–Thr-18 serves as a coordination point for ATP.

Belongs to the cytidylate kinase family. Type 1 subfamily.

The protein localises to the cytoplasm. It catalyses the reaction CMP + ATP = CDP + ADP. It carries out the reaction dCMP + ATP = dCDP + ADP. This Flavobacterium johnsoniae (strain ATCC 17061 / DSM 2064 / JCM 8514 / BCRC 14874 / CCUG 350202 / NBRC 14942 / NCIMB 11054 / UW101) (Cytophaga johnsonae) protein is Cytidylate kinase.